Reading from the N-terminus, the 252-residue chain is Hydroxyacylglutathione hydrolase (252 aa).

Residues H54, H56, D58, H59, H113, D132, and H170 each coordinate Zn(2+).

The protein belongs to the metallo-beta-lactamase superfamily. Glyoxalase II family. Monomer. Zn(2+) is required as a cofactor.

It carries out the reaction an S-(2-hydroxyacyl)glutathione + H2O = a 2-hydroxy carboxylate + glutathione + H(+). It participates in secondary metabolite metabolism; methylglyoxal degradation; (R)-lactate from methylglyoxal: step 2/2. Thiolesterase that catalyzes the hydrolysis of S-D-lactoyl-glutathione to form glutathione and D-lactic acid. The polypeptide is Hydroxyacylglutathione hydrolase (Synechococcus sp. (strain JA-3-3Ab) (Cyanobacteria bacterium Yellowstone A-Prime)).